A 441-amino-acid chain; its full sequence is MAGUK p55 subfamily member 4 (441 aa).

The PDZ domain occupies 1–84 (MRTVCLVKNQ…TIMFKVIPVS (84 aa)). In terms of domain architecture, SH3 spans 91-161 (QTTVYVRAMI…PSNHLLKRKQ (71 aa)). The Guanylate kinase-like domain maps to 232-421 (HRLIVLVGPS…ARAQLLSAIQ (190 aa)). A coiled-coil region spans residues 373-430 (VDMKFKDEDLQEMEELAQKMESQFGQFFDHVIVNDNLQDARAQLLSAIQKAEEELQWV).

This sequence belongs to the MAGUK family. In terms of assembly, interacts with MPDZ. May interact with GRIA2. Forms a complex with CRB1 and PALS1. Interacts with FASLG. As to expression, highly expressed in brain and detected in lung, and bone (at protein level). Also expressed in intestine and spleen.

Its subcellular location is the cytoplasm. Functionally, may play a role in retinal photoreceptors development. This Rattus norvegicus (Rat) protein is MAGUK p55 subfamily member 4 (Mpp4).